We begin with the raw amino-acid sequence, 1553 residues long: Dual oxidase 1 (1553 aa).

A signal peptide spans 1-21 (MGFRLALAWTLLVGPWMPMGA). The Extracellular portion of the chain corresponds to 22–596 (RNSISWEVQR…YFKGSGFGFG (575 aa)). The segment at 26–593 (SWEVQRFDGW…MRDYFKGSGF (568 aa)) is peroxidase-like; mediates peroxidase activity. Residues Asn-94, Asn-342, Asn-354, and Asn-534 are each glycosylated (N-linked (GlcNAc...) asparagine). A helical transmembrane segment spans residues 597 to 617 (VTIGTLCCFPLVSLLSAWIVA). Residues 618–1046 (QLRRRNFKRL…KRFVENYRRH (429 aa)) lie on the Cytoplasmic side of the membrane. 3 EF-hand domains span residues 815–850 (PQDMFVESMFSLADKDGNGYLSFREFLDILVVFMKG), 851–886 (SPEEKSRLMFRMYDFDGNGLISKDEFIRMLRSFIEI), and 895–930 (QLTEVVESMFREAGFQDKQELTWEDFHFMLRDHDSE). 9 residues coordinate Ca(2+): Asp-828, Asp-830, Asn-832, Tyr-834, Glu-839, Asp-864, Asp-866, Asn-868, and Glu-875. An interaction with TXNDC11 region spans residues 956–1250 (YISQEKLCPS…GSFALIQLPR (295 aa)). The helical transmembrane segment at 1047 to 1067 (IGCLAVFYTIAGGLFLERAYY) threads the bilayer. Over 1068–1082 (YAFAAHHMGITDTTR) the chain is Extracellular. The chain crosses the membrane as a helical span at residues 1083 to 1103 (VGIILSRGTAASISFMFSYIL). The 183-residue stretch at 1089–1271 (RGTAASISFM…YVGDKLVSLS (183 aa)) folds into the Ferric oxidoreductase domain. Topologically, residues 1104-1138 (LTMCRNLITFLRETFLNRYVPFDAAVDFHRLIAST) are cytoplasmic. Residues 1139-1159 (AIILTVLHSAGHVVNVYLFSI) traverse the membrane as a helical segment. Topologically, residues 1160–1190 (SPLSVLSCLFPGLFHDNGSEFPQKYYWWFFQ) are extracellular. A helical membrane pass occupies residues 1191 to 1211 (TVPGLTGVMLLLILAIMYVFA). Topologically, residues 1212–1228 (SHHFRRCSFRGFWLTHH) are cytoplasmic. Residues 1229–1249 (LYILLYMLLIIHGSFALIQLP) traverse the membrane as a helical segment. Residue Arg-1250 is a topological domain, extracellular. Residues 1251–1271 (FHIFFLVPALIYVGDKLVSLS) traverse the membrane as a helical segment. Positions 1272-1378 (RKKVEISVVK…DGPFGEGHQE (107 aa)) constitute an FAD-binding FR-type domain. Over 1272–1553 (RKKVEISVVK…THFSHHYENF (282 aa)) the chain is Cytoplasmic.

It in the N-terminal section; belongs to the peroxidase family. As to quaternary structure, interacts with TXNDC11, TPO and CYBA. Post-translationally, N-glycosylated. In terms of tissue distribution, specifically expressed in thyroid.

The protein localises to the apical cell membrane. The enzyme catalyses NADH + O2 + H(+) = H2O2 + NAD(+). It carries out the reaction NADPH + O2 + H(+) = H2O2 + NADP(+). It functions in the pathway hormone biosynthesis; thyroid hormone biosynthesis. With respect to regulation, the NADPH oxidase activity is calcium-dependent. Peroxidase activity is inhibited by aminobenzohydrazide. Its function is as follows. Generates hydrogen peroxide which is required for the activity of thyroid peroxidase/TPO and lactoperoxidase/LPO. Plays a role in thyroid hormones synthesis and lactoperoxidase-mediated antimicrobial defense at the surface of mucosa. May have its own peroxidase activity through its N-terminal peroxidase-like domain. The polypeptide is Dual oxidase 1 (DUOX1) (Sus scrofa (Pig)).